The primary structure comprises 258 residues: Imidazole glycerol phosphate synthase subunit HisF (258 aa).

Active-site residues include aspartate 11 and aspartate 130.

It belongs to the HisA/HisF family. Heterodimer of HisH and HisF.

It is found in the cytoplasm. It carries out the reaction 5-[(5-phospho-1-deoxy-D-ribulos-1-ylimino)methylamino]-1-(5-phospho-beta-D-ribosyl)imidazole-4-carboxamide + L-glutamine = D-erythro-1-(imidazol-4-yl)glycerol 3-phosphate + 5-amino-1-(5-phospho-beta-D-ribosyl)imidazole-4-carboxamide + L-glutamate + H(+). The protein operates within amino-acid biosynthesis; L-histidine biosynthesis; L-histidine from 5-phospho-alpha-D-ribose 1-diphosphate: step 5/9. In terms of biological role, IGPS catalyzes the conversion of PRFAR and glutamine to IGP, AICAR and glutamate. The HisF subunit catalyzes the cyclization activity that produces IGP and AICAR from PRFAR using the ammonia provided by the HisH subunit. In Buchnera aphidicola subsp. Baizongia pistaciae (strain Bp), this protein is Imidazole glycerol phosphate synthase subunit HisF.